We begin with the raw amino-acid sequence, 551 residues long: Calcium-dependent protein kinase 13 (551 aa).

G2 carries the N-myristoyl glycine lipid modification. The interval 15–78 (SFKQTASQRH…APADLGSVLG (64 aa)) is disordered. In terms of domain architecture, Protein kinase spans 88–346 (YAMGRKLGQG…AHEVLCHPWI (259 aa)). Residues 94–102 (LGQGQFGTT) and K117 contribute to the ATP site. Catalysis depends on D212, which acts as the Proton acceptor. Residues 352 to 382 (APDRPLDPAVLSRIKQFSAMNKLKKMALRVI) are autoinhibitory domain. EF-hand domains are found at residues 389-424 (EEIAGLKEMFQTMDADNSGAITYDELKEGLRKYGST), 425-460 (LKDTEIRDLMDAADIDNSGTIDYIEFIAATLHLNKL), 461-496 (EREEHLVAAFSYFDKDGSGYITVDELQQACKEHNMP), and 497-530 (DAFLDDVINEADQDNDGRIDYGEFVAMMTKGNMG). Positions 402, 404, 406, 413, 438, 440, 442, 444, 449, 474, 476, 478, 480, 485, 508, 510, 512, 514, and 519 each coordinate Ca(2+).

Belongs to the protein kinase superfamily. Ser/Thr protein kinase family. CDPK subfamily. Expressed in vascular tissues of crowns and roots, vascular bundles and central cylinder. Expressed in roots, leaf blades, spikelets and developing seeds.

The protein localises to the membrane. It carries out the reaction L-seryl-[protein] + ATP = O-phospho-L-seryl-[protein] + ADP + H(+). The enzyme catalyses L-threonyl-[protein] + ATP = O-phospho-L-threonyl-[protein] + ADP + H(+). With respect to regulation, activated by calcium. Autophosphorylation may play an important role in the regulation of the kinase activity. May play a role in signal transduction pathways that involve calcium as a second messenger. May function in signal transduction pathways that positively regulate responses to cold, salt and drought stresses. The sequence is that of Calcium-dependent protein kinase 13 from Oryza sativa subsp. japonica (Rice).